The following is a 363-amino-acid chain: Peptide chain release factor 1 (363 aa).

Gln237 carries the post-translational modification N5-methylglutamine. Basic and acidic residues predominate over residues 284 to 296 (EDEKRRSAEESTR). The disordered stretch occupies residues 284–305 (EDEKRRSAEESTRRSLVASGDR).

Belongs to the prokaryotic/mitochondrial release factor family. Post-translationally, methylated by PrmC. Methylation increases the termination efficiency of RF1.

The protein resides in the cytoplasm. Functionally, peptide chain release factor 1 directs the termination of translation in response to the peptide chain termination codons UAG and UAA. The chain is Peptide chain release factor 1 from Shewanella sp. (strain MR-4).